The following is a 1478-amino-acid chain: ATP-binding cassette transporter abc2 (1478 aa).

Residues 1-25 are Vacuolar-facing; sequence MVLEQDLDPFVGGNWMNSAYKGFTF. The helical transmembrane segment at 26–46 threads the bilayer; the sequence is LSATWLAPNIYLLISGCLQYF. At 47–65 the chain is on the cytoplasmic side; that stretch reads YEVRKRSHYFHFRRFWTIW. Residues 66–85 form a helical membrane-spanning segment; that stretch reads LKSLVIMVLLFTHIYDCYKT. The N-linked (GlcNAc...) asparagine glycan is linked to N86. Residues 86-90 are Vacuolar-facing; sequence NESVW. The helical transmembrane segment at 91–104 threads the bilayer; sequence NVLSIITYFLALFL. The Cytoplasmic portion of the chain corresponds to 105 to 116; sequence HVVEQPTLRIPM. Residues 117–137 traverse the membrane as a helical segment; that stretch reads ASLLMFWLFKFLASALVLLLR. Residues 138–154 lie on the Vacuolar side of the membrane; sequence PNYTMFPMLNVVPSITF. N-linked (GlcNAc...) asparagine glycosylation is present at N139. A helical transmembrane segment spans residues 155–175; sequence FCSLVCLLAEIYVPPANRVWY. The Cytoplasmic segment spans residues 176 to 259; sequence PDDAAELEET…KKSSLYMWGV (84 aa). A helical transmembrane segment spans residues 260 to 280; that stretch reads LFLNHWKLTVVIIVLKLVQDV. The ABC transmembrane type-1 1 domain maps to 268–557; it reads TVVIIVLKLV…LPIVVSSVLE (290 aa). Over 281-310 the chain is Vacuolar; sequence VAFIQPNLIRKIVIFVSSYSSEHPQPPQVG. A helical membrane pass occupies residues 311-331; that stretch reads FSLAIAMFLTNVVQTALLQQY. Residues 332–387 lie on the Cytoplasmic side of the membrane; sequence FQLGMVLGMRWRSELITAIYRKSLRLSSAARQSRSVGDIVNYMSVDTQKVCDLTMF. Residues 388-408 traverse the membrane as a helical segment; it reads LFVIVSGPFQIVLALTNLYHL. Topologically, residues 409–411 are vacuolar; that stretch reads VGY. A helical transmembrane segment spans residues 412–432; sequence GALSGAFVTFLLFPCNVVIAS. Topologically, residues 433–495 are cytoplasmic; it reads IFKRFQNRQM…MLKKIGIVNT (63 aa). The helical transmembrane segment at 496–516 threads the bilayer; it reads IGNFTWLFAPILVSAATFGTF. Residues 517–539 lie on the Vacuolar side of the membrane; that stretch reads IVLYGKTRVLSVDIVFACLSLFN. Residues 540 to 560 form a helical membrane-spanning segment; it reads LLQFPLTMLPIVVSSVLEASV. Over 561 to 910 the chain is Cytoplasmic; that stretch reads AISRIYGFLT…VKWKVYWTYF (350 aa). Residues 593–821 form the ABC transporter 1 domain; it reads LEIKKGTFSW…PDSQLFQLLS (229 aa). Residue 631 to 638 coordinates ATP; sequence GKVGMGKS. Residues 828-867 form a disordered region; it reads TASSTGADTPLSRSQSVITSSTDVTSSASRSSDTVSNYPK. Positions 829 to 840 are enriched in polar residues; that stretch reads ASSTGADTPLSR. S839, S843, and S863 each carry phosphoserine. Residues 841-863 show a composition bias toward low complexity; sequence SQSVITSSTDVTSSASRSSDTVS. The chain crosses the membrane as a helical span at residues 911–931; that stretch reads KACSLFLIFLYFLFIIGGIGM. The region spanning 918–1202 is the ABC transmembrane type-1 2 domain; that stretch reads IFLYFLFIIG…VVRQSVDVET (285 aa). The Vacuolar portion of the chain corresponds to 932 to 968; that stretch reads NVGTNVWLKHWSEVNTQLGYNPKPYFYLGIYTLFGLL. A helical transmembrane segment spans residues 969-990; it reads SCALISLSSLTITVFCAIKSCR. Residues 991–1033 lie on the Cytoplasmic side of the membrane; that stretch reads YLHDSMVKAVLRAPMSFFETTPTGRILNRFSSDVYRVDEVISR. The chain crosses the membrane as a helical span at residues 1034 to 1054; sequence VFMFFFRNLFQIVFVLAVICY. A topological domain (vacuolar) is located at residue S1055. A helical membrane pass occupies residues 1056–1076; it reads SPMFMILIVPLFFLYRYNQVY. Residues 1077–1147 lie on the Cytoplasmic side of the membrane; it reads YTQTSRELKR…SSNRWQAIRV (71 aa). Residues 1148-1168 form a helical membrane-spanning segment; the sequence is EAIGALVVFSSAFFGVLSAVR. Residues 1169 to 1172 are Vacuolar-facing; sequence GNPN. The helical transmembrane segment at 1173–1193 threads the bilayer; it reads SGLVGLSLSYAVQITQSLTFV. Residues 1194 to 1478 are Cytoplasmic-facing; it reads VRQSVDVETN…YSLAKESGLI (285 aa). Positions 1239-1473 constitute an ABC transporter 2 domain; it reads IKFDHYSVRY…KASLFYSLAK (235 aa). Position 1273–1280 (1273–1280) interacts with ATP; the sequence is GRTGAGKS.

This sequence belongs to the ABC transporter superfamily. ABCC family. Conjugate transporter (TC 3.A.1.208) subfamily.

The protein localises to the vacuole membrane. In terms of biological role, involved in vacuolar sequestration of glutathione S-conjugates. Together with abc4, required for accumulation of a red pigment (ade pigment) in the vacuole of a mutant affected in the adenine biosynthetic pathway. This chain is ATP-binding cassette transporter abc2 (abc2), found in Schizosaccharomyces pombe (strain 972 / ATCC 24843) (Fission yeast).